Reading from the N-terminus, the 326-residue chain is tRNA-dihydrouridine(16) synthase (326 aa).

Residues 8-10 (PME) and Q69 contribute to the FMN site. C99 (proton donor) is an active-site residue. FMN is bound by residues K140, 200 to 202 (NGE), and 224 to 225 (GR).

Belongs to the Dus family. DusC subfamily. Requires FMN as cofactor.

It carries out the reaction 5,6-dihydrouridine(16) in tRNA + NADP(+) = uridine(16) in tRNA + NADPH + H(+). The enzyme catalyses 5,6-dihydrouridine(16) in tRNA + NAD(+) = uridine(16) in tRNA + NADH + H(+). Its function is as follows. Catalyzes the synthesis of 5,6-dihydrouridine (D), a modified base found in the D-loop of most tRNAs, via the reduction of the C5-C6 double bond in target uridines. Specifically modifies U16 in tRNAs. The protein is tRNA-dihydrouridine(16) synthase of Ralstonia nicotianae (strain ATCC BAA-1114 / GMI1000) (Ralstonia solanacearum).